A 563-amino-acid chain; its full sequence is NAD(P)H-quinone oxidoreductase chain 4 (563 aa).

Transmembrane regions (helical) follow at residues 25-45 (FPWL…VPFI), 56-76 (WFAL…YLYG), 90-110 (VSWL…ISMP), 111-131 (LILL…PVTF), 133-153 (PKLF…VFAV), 157-177 (LLFF…LAIW), 189-209 (FIIY…AMGF), 230-250 (GFQL…LPIV), 264-284 (TAPV…YALM), 298-318 (FAPL…LTSF), 335-355 (MGFV…GAML), 356-376 (QMIS…ATYD), 397-417 (FALW…SGFV), 438-458 (IVIA…LLSM), and 485-505 (VYII…PRLM).

It belongs to the complex I subunit 4 family.

The protein localises to the cellular thylakoid membrane. It carries out the reaction a plastoquinone + NADH + (n+1) H(+)(in) = a plastoquinol + NAD(+) + n H(+)(out). It catalyses the reaction a plastoquinone + NADPH + (n+1) H(+)(in) = a plastoquinol + NADP(+) + n H(+)(out). NDH-1 shuttles electrons from NAD(P)H, via FMN and iron-sulfur (Fe-S) centers, to quinones in the respiratory chain. The immediate electron acceptor for the enzyme in this species is believed to be plastoquinone. Couples the redox reaction to proton translocation (for every two electrons transferred, four hydrogen ions are translocated across the cytoplasmic membrane), and thus conserves the redox energy in a proton gradient. The protein is NAD(P)H-quinone oxidoreductase chain 4 of Prochlorococcus marinus (strain MIT 9313).